Here is a 309-residue protein sequence, read N- to C-terminus: UDP-N-acetylenolpyruvoylglucosamine reductase (309 aa).

The region spanning 33–198 is the FAD-binding PCMH-type domain; sequence RVGGPAQVLF…TSARFRGTPA (166 aa). Arg-178 is a catalytic residue. The active-site Proton donor is the Ser-227. Residue Glu-297 is part of the active site.

This sequence belongs to the MurB family. FAD is required as a cofactor.

Its subcellular location is the cytoplasm. It catalyses the reaction UDP-N-acetyl-alpha-D-muramate + NADP(+) = UDP-N-acetyl-3-O-(1-carboxyvinyl)-alpha-D-glucosamine + NADPH + H(+). It participates in cell wall biogenesis; peptidoglycan biosynthesis. Functionally, cell wall formation. The polypeptide is UDP-N-acetylenolpyruvoylglucosamine reductase (Rhodopseudomonas palustris (strain HaA2)).